The following is a 331-amino-acid chain: Gem-associated protein 2 (331 aa).

Disordered stretches follow at residues 1–23 (MDEF…NEPL), 101–130 (SNRP…LIPQ), and 151–222 (NNNN…TKKP). The span at 11 to 21 (VGEEIEPDDNE) shows a compositional bias: acidic residues. A compositionally biased stretch (low complexity) spans 106-126 (NNNNNNNNNNNNNNNNNNNNN). Over residues 165–215 (DNQEDDDDDENNEDYEYNENKEEEEEEEEEEEEEEEVEEEEEEEEEEEEVV) the composition is skewed to acidic residues. A coiled-coil region spans residues 173 to 224 (DENNEDYEYNENKEEEEEEEEEEEEEEEVEEEEEEEEEEEEVVDYSTKKPTL).

Belongs to the gemin-2 family.

It localises to the nucleus. The protein resides in the gem. Its subcellular location is the cytoplasm. Its function is as follows. The SMN complex catalyzes the assembly of small nuclear ribonucleoproteins (snRNPs), the building blocks of the spliceosome, and thereby plays an important role in the splicing of cellular pre-mRNAs. Most spliceosomal snRNPs contain a common set of Sm proteins SNRPB, SNRPD1, SNRPD2, SNRPD3, SNRPE, SNRPF and SNRPG that assemble in a heptameric protein ring on the Sm site of the small nuclear RNA to form the core snRNP (Sm core). In the cytosol, the Sm proteins SNRPD1, SNRPD2, SNRPE, SNRPF and SNRPG (5Sm) are trapped in an inactive 6S pICln-Sm complex by the chaperone CLNS1A that controls the assembly of the core snRNP. To assemble core snRNPs, the SMN complex accepts the trapped 5Sm proteins from CLNS1A. Binding of snRNA inside 5Sm ultimately triggers eviction of the SMN complex, thereby allowing binding of SNRPD3 and SNRPB to complete assembly of the core snRNP. Within the SMN complex, GEMIN2 constrains the conformation of 5Sm, thereby promoting 5Sm binding to snRNA containing the snRNP code (a nonameric Sm site and a 3'-adjacent stem-loop), thus preventing progression of assembly until a cognate substrate is bound. Functionally, may play an essential role in spliceosomal snRNP assembly in the cytoplasm and may be required for pre-mRNA splicing in the nucleus. This Dictyostelium discoideum (Social amoeba) protein is Gem-associated protein 2 (gemin2).